We begin with the raw amino-acid sequence, 288 residues long: L-xylulose reductase (288 aa).

NADP(+)-binding residues include Ile-39, Asn-113, and Lys-147. Catalysis depends on Ser-181, which acts as the Proton donor. Residues Tyr-196, Lys-200, Ile-228, and Thr-230 each contribute to the NADP(+) site. Tyr-196 (proton acceptor) is an active-site residue. Lys-200 acts as the Lowers pKa of active site Tyr in catalysis.

Belongs to the short-chain dehydrogenases/reductases (SDR) family.

The enzyme catalyses xylitol + NADP(+) = L-xylulose + NADPH + H(+). Its pathway is carbohydrate degradation; L-arabinose degradation via L-arabinitol; D-xylulose 5-phosphate from L-arabinose (fungal route): step 3/5. Its function is as follows. L-xylulose reductase involved in the catabolism of L-arabinose through an oxidoreductive pathway. Catalyzes the NADPH-dependent reduction of L-xylulose. Is also able to convert D-xylulose, D-ribulose, L-sorbose, and D-fructose to their corresponding polyols. This Hypocrea jecorina (strain QM6a) (Trichoderma reesei) protein is L-xylulose reductase.